The following is a 429-amino-acid chain: Glucose-6-phosphate isomerase (429 aa).

Glu-282 serves as the catalytic Proton donor. Residues His-303 and Lys-418 contribute to the active site.

Belongs to the GPI family.

The protein resides in the cytoplasm. It catalyses the reaction alpha-D-glucose 6-phosphate = beta-D-fructose 6-phosphate. It functions in the pathway carbohydrate biosynthesis; gluconeogenesis. The protein operates within carbohydrate degradation; glycolysis; D-glyceraldehyde 3-phosphate and glycerone phosphate from D-glucose: step 2/4. In terms of biological role, catalyzes the reversible isomerization of glucose-6-phosphate to fructose-6-phosphate. The chain is Glucose-6-phosphate isomerase from Mesomycoplasma hyopneumoniae (strain J / ATCC 25934 / NCTC 10110) (Mycoplasma hyopneumoniae).